The chain runs to 893 residues: MKIGSGFLSGGGGPSSSGGSGSGGSSGSASGGSGGGRRAEMEPTFPQSMVMFNHRLPPVTSFTRPAGTAAPPPQCVLSSSTSAAPAAEPPPPPAPDMTFKKEPAASAAAFPSQRTSWGFLQSLVSIKQEKPADPEEQPSHHHHHHHHYGGLFAGAEERSPGLGGGEGGSHGVIQDLSLLHQHAQQQPAQHHRDVLLSSGSRTDEHGNQEPKQDANVKKAKRPKPESQGIKAKRKPSASSKPLVGEGEGAVLSPSQKPHICDHCSAAFRSSYHLRRHVLIHTGERPFQCSQCSMGFIQKYLLQRHEKIHSREKPFGCDQCSMKFIQKYHMERHKRTHSGEKPYKCDTCQQYFSRTDRLLKHRRTCGEAIAKGAASAEPGSSNHNSMGNLAVLSQGNTSSSRRKSKSKSIAIENKEHKTGKTNESQMSNNINMQSYSVEMPTVSTSGSIIGTGIDELQKRVPKLIFKKGSRKNADKSYLNFVSPLPDVVGQKSLSGKPGGSLGIVSNNSVETISLLQSTSGKQGPISSNYDDAMQFSKKRRYLPTASSNSAFSINVGHMVSQQSVIQSAGVSVLDNEAPLSLIDSSALNAEIKSCHDKSGIPDEVLQSILDQYSGKSETQKEDPFNLTEPRVDLHTSGEHSELVQEENLSPGTQTPSNDKTSMLQEYSKYLQQAFEKSTNAGFTLGHGFQFVSLSSPLHNHTLFPEKQIYTTSPLECGFGQSVTSVLPSSLPKPPFGMLFGSQPGLYLSALDATHQQLTPSQELDDLIDSQKNLETSSAFQSSSQKLTSQKEQQKNLESSTSFQIPSQELASQIDPQKDIEPRTTYQIENFAQAFGSQFKSGSRVPMTFITNSNGEVDHRVRTSVSDFSGYTNMMSDVSEPCSTRVKTPTSQSYR.

Disordered regions lie at residues 1-113, 126-148, 153-172, and 198-251; these read MKIG…FPSQ, IKQEKPADPEEQPSHHHHHHHHY, AGAEERSPGLGGGEGGSHGV, and SGSR…GAVL. Lysine 2 participates in a covalent cross-link: Glycyl lysine isopeptide (Lys-Gly) (interchain with G-Cter in SUMO2). Positions 7-36 are enriched in gly residues; the sequence is FLSGGGGPSSSGGSGSGGSSGSASGGSGGG. Residues lysine 100 and lysine 127 each participate in a glycyl lysine isopeptide (Lys-Gly) (interchain with G-Cter in SUMO2) cross-link. The segment covering 127–139 has biased composition (basic and acidic residues); it reads KQEKPADPEEQPS. Residues 161–170 are compositionally biased toward gly residues; it reads GLGGGEGGSH. Over residues 201–216 the composition is skewed to basic and acidic residues; it reads RTDEHGNQEPKQDANV. Glycyl lysine isopeptide (Lys-Gly) (interchain with G-Cter in SUMO2) cross-links involve residues lysine 211, lysine 217, lysine 223, lysine 230, lysine 240, and lysine 256. 3 C2H2-type zinc fingers span residues 258 to 280, 286 to 308, and 314 to 336; these read HICDHCSAAFRSSYHLRRHVLIH, FQCSQCSMGFIQKYLLQRHEKIH, and FGCDQCSMKFIQKYHMERHKRTH. Glycyl lysine isopeptide (Lys-Gly) (interchain with G-Cter in SUMO2) cross-links involve residues lysine 298 and lysine 322. The C2H2-type 4; atypical zinc-finger motif lies at 342–364; sequence YKCDTCQQYFSRTDRLLKHRRTC. A Glycyl lysine isopeptide (Lys-Gly) (interchain with G-Cter in SUMO2) cross-link involves residue lysine 370. Residues 371-425 are disordered; the sequence is GAASAEPGSSNHNSMGNLAVLSQGNTSSSRRKSKSKSIAIENKEHKTGKTNESQM. Positions 377–396 are enriched in polar residues; it reads PGSSNHNSMGNLAVLSQGNT. Phosphoserine is present on serine 392. Residues lysine 406, lysine 413, lysine 457, and lysine 474 each participate in a glycyl lysine isopeptide (Lys-Gly) (interchain with G-Cter in SUMO2) cross-link. A Phosphoserine modification is found at serine 481. Residues lysine 490, lysine 495, lysine 536, lysine 596, lysine 614, and lysine 619 each participate in a glycyl lysine isopeptide (Lys-Gly) (interchain with G-Cter in SUMO2) cross-link. A disordered region spans residues 613-658; the sequence is GKSETQKEDPFNLTEPRVDLHTSGEHSELVQEENLSPGTQTPSNDK. Residues 616–641 are compositionally biased toward basic and acidic residues; that stretch reads ETQKEDPFNLTEPRVDLHTSGEHSEL. Residues 645–658 are compositionally biased toward polar residues; sequence ENLSPGTQTPSNDK. Serine 648 is modified (phosphoserine). Glycyl lysine isopeptide (Lys-Gly) (interchain with G-Cter in SUMO2) cross-links involve residues lysine 658 and lysine 667. A compositionally biased stretch (polar residues) spans 775 to 813; that stretch reads SSAFQSSSQKLTSQKEQQKNLESSTSFQIPSQELASQID. Positions 775 to 815 are disordered; sequence SSAFQSSSQKLTSQKEQQKNLESSTSFQIPSQELASQIDPQ. Serine 782 is modified (phosphoserine). Residues lysine 784, lysine 789, and lysine 793 each participate in a glycyl lysine isopeptide (Lys-Gly) (interchain with G-Cter in SUMO2) cross-link. Residue serine 805 is modified to Phosphoserine. Glycyl lysine isopeptide (Lys-Gly) (interchain with G-Cter in SUMO2) cross-links involve residues lysine 816 and lysine 838. Threonine 886 is modified (phosphothreonine).

Belongs to the krueppel C2H2-type zinc-finger protein family. Interacts with NANOG. Associates with the NuRD complex.

The protein resides in the nucleus. Transcription repressor that plays a role in regulation of embryonic stem cells (ESCs) differentiation. Required for ESCs differentiation and acts by mediating autorepression of NANOG in ESCs: binds to the NANOG promoter and promotes association of NANOG protein to its own promoter and recruits the NuRD complex, which deacetylates histones. Not required for establishement and maintenance of ESCs. Represses the transcription of a number of genes including GAST, ODC1 and VIM. Binds to the G-rich box in the enhancer region of these genes. This chain is Zinc finger protein 281 (Znf281), found in Mus musculus (Mouse).